A 170-amino-acid chain; its full sequence is Acetyl-CoA decarbonylase/synthase complex subunit epsilon 1 (170 aa).

It belongs to the CdhB family. In terms of assembly, heterotetramer of two alpha and two epsilon subunits. The ACDS complex is made up of alpha, epsilon, beta, gamma and delta subunits with a probable stoichiometry of (alpha(2)epsilon(2))(4)-beta(8)-(gamma(1)delta(1))(8).

Its pathway is one-carbon metabolism; methanogenesis from acetate. Part of a complex that catalyzes the reversible cleavage of acetyl-CoA, allowing growth on acetate as sole source of carbon and energy. The alpha-epsilon subcomponent functions as a carbon monoxide dehydrogenase. The precise role of the epsilon subunit is unclear; it may have a stabilizing role within the alpha(2)epsilon(2) component and/or be involved in electron transfer to FAD during a potential FAD-mediated CO oxidation. This is Acetyl-CoA decarbonylase/synthase complex subunit epsilon 1 from Methanosarcina barkeri (strain Fusaro / DSM 804).